We begin with the raw amino-acid sequence, 72 residues long: Arrestin-E (72 aa).

It belongs to the arrestin family. In terms of tissue distribution, adrenal, cerebral cortex, heart, hypothalamus, intestine, liver, lung, pituitary, retina and testis.

The chain is Arrestin-E (Ear) from Rattus norvegicus (Rat).